We begin with the raw amino-acid sequence, 454 residues long: UDP-N-acetylmuramate--L-alanine ligase (454 aa).

109-115 (GTHGKTT) is an ATP binding site.

It belongs to the MurCDEF family.

It is found in the cytoplasm. It carries out the reaction UDP-N-acetyl-alpha-D-muramate + L-alanine + ATP = UDP-N-acetyl-alpha-D-muramoyl-L-alanine + ADP + phosphate + H(+). It functions in the pathway cell wall biogenesis; peptidoglycan biosynthesis. In terms of biological role, cell wall formation. The chain is UDP-N-acetylmuramate--L-alanine ligase from Protochlamydia amoebophila (strain UWE25).